We begin with the raw amino-acid sequence, 486 residues long: Bifunctional protein HldE (486 aa).

Positions 1–331 (MSTNVADLLH…NALTAESVPV (331 aa)) are ribokinase. 207 to 210 (NLGE) contacts ATP. Residue aspartate 276 is part of the active site. The tract at residues 358 to 486 (VTNGCFDLLH…STTKLIEKGH (129 aa)) is cytidylyltransferase.

It in the N-terminal section; belongs to the carbohydrate kinase PfkB family. The protein in the C-terminal section; belongs to the cytidylyltransferase family. Homodimer.

The catalysed reaction is D-glycero-beta-D-manno-heptose 7-phosphate + ATP = D-glycero-beta-D-manno-heptose 1,7-bisphosphate + ADP + H(+). It catalyses the reaction D-glycero-beta-D-manno-heptose 1-phosphate + ATP + H(+) = ADP-D-glycero-beta-D-manno-heptose + diphosphate. It functions in the pathway nucleotide-sugar biosynthesis; ADP-L-glycero-beta-D-manno-heptose biosynthesis; ADP-L-glycero-beta-D-manno-heptose from D-glycero-beta-D-manno-heptose 7-phosphate: step 1/4. It participates in nucleotide-sugar biosynthesis; ADP-L-glycero-beta-D-manno-heptose biosynthesis; ADP-L-glycero-beta-D-manno-heptose from D-glycero-beta-D-manno-heptose 7-phosphate: step 3/4. In terms of biological role, catalyzes the phosphorylation of D-glycero-D-manno-heptose 7-phosphate at the C-1 position to selectively form D-glycero-beta-D-manno-heptose-1,7-bisphosphate. Functionally, catalyzes the ADP transfer from ATP to D-glycero-beta-D-manno-heptose 1-phosphate, yielding ADP-D-glycero-beta-D-manno-heptose. This is Bifunctional protein HldE from Koribacter versatilis (strain Ellin345).